A 787-amino-acid chain; its full sequence is Disintegrin and metalloproteinase domain-containing protein 32 (787 aa).

An N-terminal signal peptide occupies residues 1–16; sequence MFRLWLLLAGLCGLLA. Position 17 is a phosphoserine (serine 17). Residues 17-174 constitute a propeptide that is removed on maturation; it reads SRPGFQNSLL…PMDDNIFISE (158 aa). 2 N-linked (GlcNAc...) asparagine glycosylation sites follow: asparagine 39 and asparagine 125. At 175-682 the chain is on the extracellular side; the sequence is KSEPAVPDLF…ERASGKTENT (508 aa). The Peptidase M12B domain occupies 186-383; sequence LYLEMHIVVD…VGVKCLQNKP (198 aa). 4 disulfide bridges follow: cysteine 295-cysteine 378, cysteine 337-cysteine 362, cysteine 339-cysteine 344, and cysteine 450-cysteine 471. The region spanning 391–479 is the Disintegrin domain; it reads KPVCGNGRLE…ECGPDITLIN (89 aa). N-linked (GlcNAc...) asparagine glycans are attached at residues asparagine 465 and asparagine 598. The EGF-like domain occupies 622–654; the sequence is SAHVCSQQCSGHGVCDSRNKCHCSPGYKPPNCQ. 3 disulfides stabilise this stretch: cysteine 626–cysteine 636, cysteine 630–cysteine 642, and cysteine 644–cysteine 653. A helical transmembrane segment spans residues 683–703; that stretch reads WLLGFLIALPILIVTTAIVLA. At 704 to 787 the chain is on the cytoplasmic side; that stretch reads RKQLKKWFAK…DSTQTQSSSN (84 aa). Residues 715 to 787 are disordered; sequence EEFPSSESKS…DSTQTQSSSN (73 aa). A compositionally biased stretch (polar residues) spans 728–749; it reads TQTYASQSSSEGSTQTYASQTR. The span at 771-787 shows a compositional bias: low complexity; that stretch reads TSRSKSQDSTQTQSSSN.

Testis specific.

It is found in the membrane. Its function is as follows. May play a role in sperm development and fertilization This is a non-catalytic metalloprotease-like protein. This Homo sapiens (Human) protein is Disintegrin and metalloproteinase domain-containing protein 32 (ADAM32).